The primary structure comprises 199 residues: Nucleoside triphosphate pyrophosphatase (199 aa).

Residue D76 is the Proton acceptor of the active site.

It belongs to the Maf family. A divalent metal cation serves as cofactor.

Its subcellular location is the cytoplasm. The catalysed reaction is a ribonucleoside 5'-triphosphate + H2O = a ribonucleoside 5'-phosphate + diphosphate + H(+). It catalyses the reaction a 2'-deoxyribonucleoside 5'-triphosphate + H2O = a 2'-deoxyribonucleoside 5'-phosphate + diphosphate + H(+). Its function is as follows. Nucleoside triphosphate pyrophosphatase. May have a dual role in cell division arrest and in preventing the incorporation of modified nucleotides into cellular nucleic acids. The sequence is that of Nucleoside triphosphate pyrophosphatase from Ruegeria sp. (strain TM1040) (Silicibacter sp.).